The primary structure comprises 210 residues: Na(+)-translocating NADH-quinone reductase subunit D (210 aa).

Helical transmembrane passes span 42–62 (VVMT…ISTI), 66–86 (IPNS…VIVV), 103–123 (VYVG…AFAM), 131–151 (FMDG…VGAF), 154–174 (LFGS…NGGW), and 178–198 (NGLL…IWAV).

The protein belongs to the NqrDE/RnfAE family. In terms of assembly, composed of six subunits; NqrA, NqrB, NqrC, NqrD, NqrE and NqrF.

The protein resides in the cell inner membrane. It catalyses the reaction a ubiquinone + n Na(+)(in) + NADH + H(+) = a ubiquinol + n Na(+)(out) + NAD(+). In terms of biological role, NQR complex catalyzes the reduction of ubiquinone-1 to ubiquinol by two successive reactions, coupled with the transport of Na(+) ions from the cytoplasm to the periplasm. NqrA to NqrE are probably involved in the second step, the conversion of ubisemiquinone to ubiquinol. This Psychromonas ingrahamii (strain DSM 17664 / CCUG 51855 / 37) protein is Na(+)-translocating NADH-quinone reductase subunit D.